A 452-amino-acid polypeptide reads, in one-letter code: MTRSDVIAAIATPPGRGGIGVVRVSGRNLQSLALKVAGCVPEPRRASLTRFRDENDRVIDQGIALYFPAPQSYTGEEVLELQGHGGPAVMNLLLASCLSAGARLAQPGEFTLRAFLNNKLDLAQAESVADLIDASTEEAARCAIRSLQGEFSNAIHTSVQALTDLRMLVEASLDFSEEEIEFISGRELEFRLEHIRQQLEQVFSAARQGSLLREGIWIALVGQPNVGKSSLLNRLAGEEVALVTEVPGTTRDVIRQVIEIEGVPMHLLDTAGLRETEDAIEKMGMARTRSTIDKASIVLLLVDSRVGITPEDQAILASLPPGLRLIVVHNKTDLLESPPNSTVSTATATADIWVSAKTGAGIGSLQQGLLEMIGWQPSTGEGAFMARQRHLSALTAARTHLEAACALANSLDQVELFAEELRLAQLALSSITGEFSADDLLGEIFSRFCIGK.

The (6S)-5-formyl-5,6,7,8-tetrahydrofolate site is built by arginine 23, glutamate 80, and lysine 119. The TrmE-type G domain maps to 215–374 (GIWIALVGQP…LQQGLLEMIG (160 aa)). Asparagine 225 is a K(+) binding site. GTP contacts are provided by residues 225 to 230 (NVGKSS), 244 to 250 (TEVPGTT), and 269 to 272 (DTAG). Position 229 (serine 229) interacts with Mg(2+). K(+)-binding residues include threonine 244, valine 246, and threonine 249. Residue threonine 250 participates in Mg(2+) binding. Lysine 452 is a binding site for (6S)-5-formyl-5,6,7,8-tetrahydrofolate.

The protein belongs to the TRAFAC class TrmE-Era-EngA-EngB-Septin-like GTPase superfamily. TrmE GTPase family. As to quaternary structure, homodimer. Heterotetramer of two MnmE and two MnmG subunits. It depends on K(+) as a cofactor.

Its subcellular location is the cytoplasm. Exhibits a very high intrinsic GTPase hydrolysis rate. Involved in the addition of a carboxymethylaminomethyl (cmnm) group at the wobble position (U34) of certain tRNAs, forming tRNA-cmnm(5)s(2)U34. This is tRNA modification GTPase MnmE from Nitrosospira multiformis (strain ATCC 25196 / NCIMB 11849 / C 71).